We begin with the raw amino-acid sequence, 2033 residues long: Envoplakin (2033 aa).

Positions 1–27 (MFKGLSKGSQGKGSPKGSPAKGSPKGS) are enriched in low complexity. Disordered regions lie at residues 1–37 (MFKG…AATQ) and 65–85 (QQDR…ETGR). The globular 1 stretch occupies residues 1 to 841 (MFKGLSKGSQ…LEPTLAVSAP (841 aa)). A 4 X 4 AA tandem repeats of K-G-S-P region spans residues 12 to 28 (KGSPKGSPAKGSPKGSP). Residues 71-84 (SEQSQALQHQQETG) show a composition bias toward polar residues. The stretch at 229 to 330 (YTHLQGCTRQ…LCICQETQLQ (102 aa)) is one Spectrin repeat. Basic and acidic residues predominate over residues 388–401 (TERATGDLQRRSRD). Disordered stretches follow at residues 388–418 (TERA…PLHV) and 891–916 (SEDI…ESEA). An SH3 domain is found at 413–470 (QQPLHVDSICDWDSGEVQLLQGERYKLVDNTDPHAWVVQGPGGETKRAPAACFCIPAP). The interval 842–1673 (KRPRVAPLQE…AKVSREELSQ (832 aa)) is central fibrous rod domain. The stretch at 845 to 1135 (RVAPLQESIQ…AISSVEPKVI (291 aa)) forms a coiled coil. Basic and acidic residues predominate over residues 891–902 (SEDIRRTHDAKQ). The Plectin 1 repeat unit spans residues 1185-1226 (KQRPKVQLQERVHEIFQVDPETEQEITRLKAKLQEMAGKRSG). Ser-1575 bears the Phosphoserine mark. Residues 1614 to 1623 (QEESKLLSQK) show a composition bias toward low complexity. A disordered region spans residues 1614 to 1636 (QEESKLLSQKTESERQKAAQRGQ). Residues 1674–2033 (ETQTRETNLS…ASPTVPRSLR (360 aa)) form a globular 2 region. A Plectin 2 repeat occupies 1678-1713 (RETNLSTKISILEPETGKDMSPYEAYKRGIIDRGQY). Phosphoserine is present on Ser-1799. Plectin repeat units follow at residues 1818–1855 (LGLG…PITG), 1856–1893 (QKLL…NTST), 1894–1931 (QRLL…RESV), 1932–1969 (LPHL…EELA), and 1970–2007 (QLLQ…PLSG). Position 2025 is a phosphoserine (Ser-2025).

This sequence belongs to the plakin or cytolinker family. In terms of assembly, may form a homodimer or a heterodimer with PPL. Exclusively expressed in stratified squamous epithelia.

It is found in the cell junction. Its subcellular location is the desmosome. The protein localises to the cornified envelope. The protein resides in the cytoplasm. It localises to the cytoskeleton. In terms of biological role, component of the cornified envelope of keratinocytes. May link the cornified envelope to desmosomes and intermediate filaments. The protein is Envoplakin (EVPL) of Homo sapiens (Human).